The primary structure comprises 188 residues: ATP synthase subunit b (188 aa).

The chain crosses the membrane as a helical span at residues 19–39 (LPAVYDIVWSAVVFVVLLVVI).

The protein belongs to the ATPase B chain family. As to quaternary structure, F-type ATPases have 2 components, F(1) - the catalytic core - and F(0) - the membrane proton channel. F(1) has five subunits: alpha(3), beta(3), gamma(1), delta(1), epsilon(1). F(0) has three main subunits: a(1), b(2) and c(10-14). The alpha and beta chains form an alternating ring which encloses part of the gamma chain. F(1) is attached to F(0) by a central stalk formed by the gamma and epsilon chains, while a peripheral stalk is formed by the delta and b chains.

The protein localises to the cell membrane. Functionally, f(1)F(0) ATP synthase produces ATP from ADP in the presence of a proton or sodium gradient. F-type ATPases consist of two structural domains, F(1) containing the extramembraneous catalytic core and F(0) containing the membrane proton channel, linked together by a central stalk and a peripheral stalk. During catalysis, ATP synthesis in the catalytic domain of F(1) is coupled via a rotary mechanism of the central stalk subunits to proton translocation. Component of the F(0) channel, it forms part of the peripheral stalk, linking F(1) to F(0). The polypeptide is ATP synthase subunit b (Clavibacter michiganensis subsp. michiganensis (strain NCPPB 382)).